The chain runs to 398 residues: uncharacterized protein (398 aa).

A run of 2 helical transmembrane segments spans residues V31–F51 and A56–C76.

The protein belongs to the chlamydial CPn_0129/CT_036/TC_0306 family.

The protein localises to the cell membrane. This is an uncharacterized protein from Chlamydia muridarum (strain MoPn / Nigg).